The primary structure comprises 405 residues: Multi-drug resistance efflux pump PmrA homolog (405 aa).

12 helical membrane-spanning segments follow: residues 13–33 (LFIT…VMPF), 50–70 (LYSG…APIW), 88–108 (IVMT…WLLG), 111–131 (LLMG…ASQA), 147–167 (MVSG…WFGM), 170–190 (VFLI…FFVH), 216–236 (ILFG…SIEP), 254–274 (FISG…SSFL), 286–306 (LILI…FVQS), 308–328 (LQLG…TPSV), 350–370 (MCSN…AGYI), and 374–394 (AAIV…FINF).

Belongs to the major facilitator superfamily. TCR/Tet family.

Its subcellular location is the cell membrane. Functionally, efflux pump for various substrates. This chain is Multi-drug resistance efflux pump PmrA homolog (pmrA), found in Lactococcus lactis subsp. lactis (strain IL1403) (Streptococcus lactis).